Reading from the N-terminus, the 312-residue chain is tRNA dimethylallyltransferase (312 aa).

Residue 10–17 participates in ATP binding; sequence GPTGVGKT. 12–17 is a substrate binding site; the sequence is TGVGKT.

The protein belongs to the IPP transferase family. Monomer. Mg(2+) serves as cofactor.

It catalyses the reaction adenosine(37) in tRNA + dimethylallyl diphosphate = N(6)-dimethylallyladenosine(37) in tRNA + diphosphate. In terms of biological role, catalyzes the transfer of a dimethylallyl group onto the adenine at position 37 in tRNAs that read codons beginning with uridine, leading to the formation of N6-(dimethylallyl)adenosine (i(6)A). The chain is tRNA dimethylallyltransferase from Coprothermobacter proteolyticus (strain ATCC 35245 / DSM 5265 / OCM 4 / BT).